Consider the following 246-residue polypeptide: Trypsin V-A (246 aa).

The signal sequence occupies residues 1 to 15 (MKICIFFTLLGTVAA). A propeptide spans 16 to 24 (FPTEDNDDR) (activation peptide). The Peptidase S1 domain occupies 25–244 (IVGGYTCQEH…YLNWIHQTIA (220 aa)). 6 disulfide bridges follow: Cys-31/Cys-160, Cys-49/Cys-65, Cys-133/Cys-233, Cys-140/Cys-206, Cys-171/Cys-185, and Cys-196/Cys-220. The Charge relay system role is filled by His-64. 3 residues coordinate Ca(2+): Glu-76, Asn-78, and Glu-86. The Charge relay system role is filled by Asp-108. The active-site Charge relay system is Ser-200.

Belongs to the peptidase S1 family. It depends on Ca(2+) as a cofactor.

The protein localises to the secreted. It localises to the extracellular space. It catalyses the reaction Preferential cleavage: Arg-|-Xaa, Lys-|-Xaa.. The protein is Trypsin V-A of Rattus norvegicus (Rat).